A 211-amino-acid chain; its full sequence is MYQPDFPPVPFRLGLYPVVDSVQWIERLLDAGVRTLQLRIKDRRDEEVEADVVAAIALGRRYNARLFINDYWRLAIKHQAYGVHLGQEDLQATDLNAIRAAGLRLGVSTHDDMEIDVALAARPSYIALGHVFPTQTKQMPSAPQGLEQLARHVERLSDYPTVAIGGISLARAPAVIATGVGSIAVVSAITQAADWRLATAQLLEIAGVGDE.

4-amino-2-methyl-5-(diphosphooxymethyl)pyrimidine is bound by residues 37-41 (QLRIK) and Asn69. Mg(2+) contacts are provided by Asp70 and Asp89. A 4-amino-2-methyl-5-(diphosphooxymethyl)pyrimidine-binding site is contributed by Ser108. A 2-[(2R,5Z)-2-carboxy-4-methylthiazol-5(2H)-ylidene]ethyl phosphate-binding site is contributed by 134 to 136 (TQT). Residue Lys137 coordinates 4-amino-2-methyl-5-(diphosphooxymethyl)pyrimidine. Residues Gly166 and 186–187 (VS) contribute to the 2-[(2R,5Z)-2-carboxy-4-methylthiazol-5(2H)-ylidene]ethyl phosphate site.

Belongs to the thiamine-phosphate synthase family. Mg(2+) serves as cofactor.

It carries out the reaction 2-[(2R,5Z)-2-carboxy-4-methylthiazol-5(2H)-ylidene]ethyl phosphate + 4-amino-2-methyl-5-(diphosphooxymethyl)pyrimidine + 2 H(+) = thiamine phosphate + CO2 + diphosphate. It catalyses the reaction 2-(2-carboxy-4-methylthiazol-5-yl)ethyl phosphate + 4-amino-2-methyl-5-(diphosphooxymethyl)pyrimidine + 2 H(+) = thiamine phosphate + CO2 + diphosphate. The enzyme catalyses 4-methyl-5-(2-phosphooxyethyl)-thiazole + 4-amino-2-methyl-5-(diphosphooxymethyl)pyrimidine + H(+) = thiamine phosphate + diphosphate. It functions in the pathway cofactor biosynthesis; thiamine diphosphate biosynthesis; thiamine phosphate from 4-amino-2-methyl-5-diphosphomethylpyrimidine and 4-methyl-5-(2-phosphoethyl)-thiazole: step 1/1. Condenses 4-methyl-5-(beta-hydroxyethyl)thiazole monophosphate (THZ-P) and 2-methyl-4-amino-5-hydroxymethyl pyrimidine pyrophosphate (HMP-PP) to form thiamine monophosphate (TMP). This is Thiamine-phosphate synthase from Escherichia coli O157:H7.